The chain runs to 202 residues: N-acetyltransferase 9-like protein (202 aa).

Residues 34–184 (EEIRRLTGSE…FTFELPKNRL (151 aa)) enclose the N-acetyltransferase domain.

The protein belongs to the acetyltransferase family. GNAT subfamily.

In Caenorhabditis elegans, this protein is N-acetyltransferase 9-like protein.